Here is a 186-residue protein sequence, read N- to C-terminus: uncharacterized protein (186 aa).

Positions 1–21 are cleaved as a signal peptide; sequence MIHVKYIILGFIMVSSLNLYA.

This is an uncharacterized protein from Rickettsia conorii (strain ATCC VR-613 / Malish 7).